A 138-amino-acid chain; its full sequence is ATP synthase epsilon chain (138 aa).

It belongs to the ATPase epsilon chain family. In terms of assembly, F-type ATPases have 2 components, CF(1) - the catalytic core - and CF(0) - the membrane proton channel. CF(1) has five subunits: alpha(3), beta(3), gamma(1), delta(1), epsilon(1). CF(0) has three main subunits: a, b and c.

It is found in the cell inner membrane. Produces ATP from ADP in the presence of a proton gradient across the membrane. This chain is ATP synthase epsilon chain, found in Citrifermentans bemidjiense (strain ATCC BAA-1014 / DSM 16622 / JCM 12645 / Bem) (Geobacter bemidjiensis).